The following is a 385-amino-acid chain: Acetylornithine aminotransferase (385 aa).

Pyridoxal 5'-phosphate contacts are provided by residues 94-95 (GT) and Phe126. Arg129 is a N(2)-acetyl-L-ornithine binding site. Residue 211 to 214 (DEVQ) participates in pyridoxal 5'-phosphate binding. Lys240 carries the post-translational modification N6-(pyridoxal phosphate)lysine. Position 267 (Thr267) interacts with N(2)-acetyl-L-ornithine. Residue Thr268 coordinates pyridoxal 5'-phosphate.

Belongs to the class-III pyridoxal-phosphate-dependent aminotransferase family. ArgD subfamily. In terms of assembly, homodimer. Requires pyridoxal 5'-phosphate as cofactor.

It is found in the cytoplasm. The enzyme catalyses N(2)-acetyl-L-ornithine + 2-oxoglutarate = N-acetyl-L-glutamate 5-semialdehyde + L-glutamate. The protein operates within amino-acid biosynthesis; L-arginine biosynthesis; N(2)-acetyl-L-ornithine from L-glutamate: step 4/4. This is Acetylornithine aminotransferase from Thermotoga maritima (strain ATCC 43589 / DSM 3109 / JCM 10099 / NBRC 100826 / MSB8).